The chain runs to 313 residues: Glucan 1,3-beta-glucosidase (313 aa).

The first 23 residues, 1–23 (MRFSTTLATAATALFFTASQVSA), serve as a signal peptide directing secretion. The active-site Proton donor is Glu-124. N-linked (GlcNAc...) asparagine glycosylation is present at Asn-202. Glu-233 serves as the catalytic Nucleophile. Asn-284 carries N-linked (GlcNAc...) asparagine glycosylation.

The protein belongs to the glycosyl hydrolase 17 family.

Its subcellular location is the secreted. It localises to the cell wall. It catalyses the reaction Successive hydrolysis of beta-D-glucose units from the non-reducing ends of (1-&gt;3)-beta-D-glucans, releasing alpha-glucose.. Its function is as follows. Glucanases possibly play a role in cell expansion during growth, in cell-cell fusion during mating, and in spore release during sporulation. This enzyme may be involved in beta-glucan degradation and also function biosynthetically as a transglycosylase. This Saccharomyces cerevisiae (strain ATCC 204508 / S288c) (Baker's yeast) protein is Glucan 1,3-beta-glucosidase (BGL2).